Consider the following 163-residue polypeptide: Transcriptional repressor NrdR (163 aa).

A zinc finger lies at 3–34 (CPFCAHPEDKVVDSRESKEGESIRRRRECLKC). The ATP-cone domain occupies 49 to 139 (YMVVKKDGRR…VYLDFKDVRE (91 aa)).

Belongs to the NrdR family. Zn(2+) is required as a cofactor.

Functionally, negatively regulates transcription of bacterial ribonucleotide reductase nrd genes and operons by binding to NrdR-boxes. The sequence is that of Transcriptional repressor NrdR from Koribacter versatilis (strain Ellin345).